The sequence spans 214 residues: Thymidylate kinase (214 aa).

10-17 (GPDGAGKT) lines the ATP pocket.

Belongs to the thymidylate kinase family.

The enzyme catalyses dTMP + ATP = dTDP + ADP. Phosphorylation of dTMP to form dTDP in both de novo and salvage pathways of dTTP synthesis. The chain is Thymidylate kinase from Lacticaseibacillus casei (strain BL23) (Lactobacillus casei).